The primary structure comprises 33 residues: Photosystem II reaction center protein Psb30 (33 aa).

A helical transmembrane segment spans residues 5–25 (LIGQLVTVALVVGAGPIIIGA).

This sequence belongs to the Psb30/Ycf12 family. In terms of assembly, PSII is composed of 1 copy each of membrane proteins PsbA, PsbB, PsbC, PsbD, PsbE, PsbF, PsbH, PsbI, PsbJ, PsbK, PsbL, PsbM, PsbT, PsbX, PsbY, PsbZ, Psb30/Ycf12, peripheral proteins of the oxygen-evolving complex and a large number of cofactors. It forms dimeric complexes.

The protein resides in the plastid. It is found in the chloroplast thylakoid membrane. A core subunit of photosystem II (PSII), probably helps stabilize the reaction center. The polypeptide is Photosystem II reaction center protein Psb30 (Ostreococcus tauri).